Reading from the N-terminus, the 627-residue chain is uncharacterized protein (627 aa).

Disordered regions lie at residues 57-82, 96-121, 160-184, 198-232, 247-277, 335-358, and 449-579; these read EDAM…QGED, PEAQ…APPG, GCSH…DAAY, AQSQ…CPSG, SHDA…RGAP, RQAG…EAAY, and VFDV…PPLS. Residues 169–183 show a composition bias toward low complexity; that stretch reads SSSDQAADAPAGDAA. Over residues 336 to 357 the composition is skewed to low complexity; sequence QAGAEPAQAPATAPAPEGTEAA. Over residues 450-464 the composition is skewed to basic and acidic residues; that stretch reads FDVKEQGAHADRDAA.

This is an uncharacterized protein from Treponema pallidum (strain Nichols).